The following is a 178-amino-acid chain: uncharacterized protein (178 aa).

The segment at 64-103 is disordered; it reads GVSDNTNKTTAKDNVSDKSSENEVAQPKQVTPPVDATGNT. Residues 73-84 are compositionally biased toward basic and acidic residues; that stretch reads TAKDNVSDKSSE.

This is an uncharacterized protein from Acidianus sp. F28 (AFV-2).